A 512-amino-acid chain; its full sequence is Respiratory nitrate reductase 1 beta chain (512 aa).

3 consecutive 4Fe-4S ferredoxin-type domains span residues 7-35 (VGMVLNLDKCIGCHTCSVTCKNVWTSREG), 175-206 (TFMMYLPRLCEHCLNPACVATCPSGAIYKREE), and 208-237 (GIVLIDQDKCRGWRMCITGCPYKKIYFNWK). [4Fe-4S] cluster contacts are provided by Cys16, Cys19, Cys22, Cys26, Cys184, Cys187, and Cys192. Residues Cys196, Cys217, and Cys223 each coordinate [3Fe-4S] cluster. [4Fe-4S] cluster is bound by residues Cys227, Cys244, Cys247, Cys259, and Cys263.

In terms of assembly, dimer of heterotrimers each composed of an alpha, a beta and a gamma chain. Alpha and beta are catalytic chains; gamma chains are involved in binding the enzyme complex to the cytoplasmic membrane. The cofactor is [4Fe-4S] cluster. Requires [3Fe-4S] cluster as cofactor.

It localises to the cell membrane. The enzyme catalyses nitrate + a quinol = a quinone + nitrite + H2O. In terms of biological role, the nitrate reductase enzyme complex allows S.flexneri to use nitrate as an electron acceptor during anaerobic growth. The beta chain is an electron transfer unit containing four cysteine clusters involved in the formation of iron-sulfur centers. Electrons are transferred from the gamma chain to the molybdenum cofactor of the alpha subunit. The chain is Respiratory nitrate reductase 1 beta chain (narH) from Shigella flexneri.